The sequence spans 249 residues: 5'-nucleotidase SurE (249 aa).

Residues D8, D9, S39, and N91 each coordinate a divalent metal cation.

It belongs to the SurE nucleotidase family. The cofactor is a divalent metal cation.

The protein resides in the cytoplasm. The catalysed reaction is a ribonucleoside 5'-phosphate + H2O = a ribonucleoside + phosphate. Nucleotidase that shows phosphatase activity on nucleoside 5'-monophosphates. In Pseudomonas syringae pv. syringae (strain B728a), this protein is 5'-nucleotidase SurE.